A 941-amino-acid polypeptide reads, in one-letter code: Peroxisomal ATPase PEX6 (941 aa).

Residues 384-391 and 698-705 each bind ATP; these read GIPGCGKR and GPPGTGKT.

It belongs to the AAA ATPase family. In terms of assembly, interacts with PEX1; forming the PEX1-PEX6 AAA ATPase complex, which is composed of a heterohexamer formed by a trimer of PEX1-PEX6 dimers. Interacts with APME9.

The protein resides in the cytoplasm. The protein localises to the cytosol. It localises to the peroxisome membrane. The catalysed reaction is ATP + H2O = ADP + phosphate + H(+). In terms of biological role, component of the PEX1-PEX6 AAA ATPase complex, a protein dislocase complex that mediates the ATP-dependent extraction of the PEX5 receptor from peroxisomal membranes, an essential step for PEX5 recycling. Specifically recognizes PEX5 monoubiquitinated at 'Cys-11', and pulls it out of the peroxisome lumen through the PEX2-PEX10-PEX12 retrotranslocation channel. Extraction by the PEX1-PEX6 AAA ATPase complex is accompanied by unfolding of the TPR repeats and release of bound cargo from PEX5. Required for jasmonate biosynthesis. Necessary for the developmental elimination of obsolete peroxisome matix proteins. This Arabidopsis thaliana (Mouse-ear cress) protein is Peroxisomal ATPase PEX6.